The chain runs to 215 residues: Orotate phosphoribosyltransferase (215 aa).

Lys26 is a 5-phospho-alpha-D-ribose 1-diphosphate binding site. 34–35 (FF) serves as a coordination point for orotate. 5-phospho-alpha-D-ribose 1-diphosphate is bound by residues 72–73 (YK), Arg99, Lys100, Lys103, His105, and 124–132 (DDVITAGTA). Orotate is bound by residues Thr128 and Arg156.

This sequence belongs to the purine/pyrimidine phosphoribosyltransferase family. PyrE subfamily. Homodimer. Requires Mg(2+) as cofactor.

It catalyses the reaction orotidine 5'-phosphate + diphosphate = orotate + 5-phospho-alpha-D-ribose 1-diphosphate. It participates in pyrimidine metabolism; UMP biosynthesis via de novo pathway; UMP from orotate: step 1/2. Functionally, catalyzes the transfer of a ribosyl phosphate group from 5-phosphoribose 1-diphosphate to orotate, leading to the formation of orotidine monophosphate (OMP). The sequence is that of Orotate phosphoribosyltransferase from Shewanella oneidensis (strain ATCC 700550 / JCM 31522 / CIP 106686 / LMG 19005 / NCIMB 14063 / MR-1).